Consider the following 514-residue polypeptide: ATP synthase subunit alpha (514 aa).

170-177 is a binding site for ATP; the sequence is GDRQIGKT.

This sequence belongs to the ATPase alpha/beta chains family. As to quaternary structure, F-type ATPases have 2 components, CF(1) - the catalytic core - and CF(0) - the membrane proton channel. CF(1) has five subunits: alpha(3), beta(3), gamma(1), delta(1), epsilon(1). CF(0) has three main subunits: a(1), b(2) and c(9-12). The alpha and beta chains form an alternating ring which encloses part of the gamma chain. CF(1) is attached to CF(0) by a central stalk formed by the gamma and epsilon chains, while a peripheral stalk is formed by the delta and b chains.

Its subcellular location is the cell inner membrane. The catalysed reaction is ATP + H2O + 4 H(+)(in) = ADP + phosphate + 5 H(+)(out). Its function is as follows. Produces ATP from ADP in the presence of a proton gradient across the membrane. The alpha chain is a regulatory subunit. This is ATP synthase subunit alpha from Pseudomonas putida (strain W619).